The following is a 552-amino-acid chain: Enhanced filamentous growth protein (552 aa).

Disordered stretches follow at residues Asn-17–Gln-48, Gln-70–Gln-93, and Gln-121–Pro-180. Residues Gln-121–Thr-151 are compositionally biased toward polar residues. The 107-residue stretch at Arg-204–Gly-310 folds into the HTH APSES-type domain. The segment at residues Gly-238–Glu-259 is a DNA-binding region (H-T-H motif). 3 disordered regions span residues Thr-327 to Asn-384, Gln-410 to Met-447, and Ser-478 to Lys-552. The segment covering Ala-340 to Ser-381 has biased composition (low complexity). A compositionally biased stretch (polar residues) spans Lys-419–Asp-434. Low complexity-rich tracts occupy residues Gln-435–Met-447 and Ser-478–Gln-504. Residues Ser-516–Thr-546 are compositionally biased toward polar residues.

It belongs to the EFG1/PHD1/stuA family.

The protein localises to the nucleus. Functionally, putative transcription factor that stimulates pseudohyphal morphogenesis. This chain is Enhanced filamentous growth protein (EFG1), found in Candida albicans (Yeast).